The primary structure comprises 245 residues: Glutathione S-transferase T1 (245 aa).

The 82-residue stretch at 2–83 (MKLKVYADRM…YLSSAFPSVA (82 aa)) folds into the GST N-terminal domain. Glutathione is bound by residues 12–13 (SQ), 41–42 (QL), 54–55 (KV), and 67–68 (ES). The 144-residue stretch at 90-233 (DLSKRAKIHS…KEGFQKRREM (144 aa)) folds into the GST C-terminal domain. Positions 243–245 (SKI) match the Microbody targeting signal motif.

This sequence belongs to the GST superfamily. Theta family.

Its subcellular location is the nucleus. It is found in the peroxisome. It catalyses the reaction RX + glutathione = an S-substituted glutathione + a halide anion + H(+). Its function is as follows. In vitro, possesses glutathione S-transferase activity toward 1-chloro-2,4-dinitrobenzene (CDNB) and p-nitrobenzyl chloride (pNBC), and glutathione peroxidase activity toward cumene hydroperoxide and linoleic acid-13-hydroperoxide. May be involved in the conjugation of reduced glutathione to a wide number of exogenous and endogenous hydrophobic electrophiles and have a detoxification role against certain herbicides. This is Glutathione S-transferase T1 (GSTT1) from Arabidopsis thaliana (Mouse-ear cress).